We begin with the raw amino-acid sequence, 316 residues long: Taste receptor type 2 member 3 (316 aa).

At M1 to E6 the chain is on the extracellular side. Residues G7 to I27 form a helical membrane-spanning segment. Over E28–S42 the chain is Cytoplasmic. Residues L43–L63 form a helical membrane-spanning segment. Residues T64–H94 lie on the Extracellular side of the membrane. The helical transmembrane segment at L95 to S115 threads the bilayer. Topologically, residues H116–R128 are cytoplasmic. Residues V129–I149 traverse the membrane as a helical segment. Topologically, residues N150–T186 are extracellular. The N-linked (GlcNAc...) asparagine glycan is linked to N166. Residues L187 to L207 traverse the membrane as a helical segment. The Cytoplasmic portion of the chain corresponds to G208–R234. The helical transmembrane segment at I235–F255 threads the bilayer. Residues G256 to K266 are Extracellular-facing. The helical transmembrane segment at M267 to G287 threads the bilayer. Residues N288–S316 lie on the Cytoplasmic side of the membrane.

This sequence belongs to the G-protein coupled receptor T2R family. In terms of tissue distribution, expressed in subsets of taste receptor cells of the tongue and palate epithelium and exclusively in gustducin-positive cells. Expressed in the antrum and fundus (part of the stomach), duodenum and in gastric endocrine cells.

The protein localises to the membrane. In terms of biological role, gustducin-coupled receptor implicated in the perception of bitter compounds in the oral cavity and the gastrointestinal tract. Signals through PLCB2 and the calcium-regulated cation channel TRPM5. In Homo sapiens (Human), this protein is Taste receptor type 2 member 3 (TAS2R3).